We begin with the raw amino-acid sequence, 381 residues long: V-type proton ATPase subunit C 1-B (381 aa).

At threonine 2 the chain carries N-acetylthreonine.

Belongs to the V-ATPase C subunit family. V-ATPase is a heteromultimeric enzyme made up of two complexes: the ATP-hydrolytic V1 complex and the proton translocation V0 complex. The V1 complex consists of three catalytic AB heterodimers that form a heterohexamer, three peripheral stalks each consisting of EG heterodimers, one central rotor including subunits D and F, and the regulatory subunits C and H. The proton translocation complex V0 consists of the proton transport subunit a, a ring of proteolipid subunits c9c'', rotary subunit d, subunits e and f, and two accessory subunits.

Its function is as follows. Subunit of the V1 complex of vacuolar(H+)-ATPase (V-ATPase), a multisubunit enzyme composed of a peripheral complex (V1) that hydrolyzes ATP and a membrane integral complex (V0) that translocates protons. V-ATPase is responsible for acidifying and maintaining the pH of intracellular compartments and in some cell types, is targeted to the plasma membrane, where it is responsible for acidifying the extracellular environment. Subunit C is necessary for the assembly of the catalytic sector of the enzyme and is likely to have a specific function in its catalytic activity. The polypeptide is V-type proton ATPase subunit C 1-B (atp6v1c1b) (Danio rerio (Zebrafish)).